Consider the following 185-residue polypeptide: Ribosome-recycling factor (185 aa).

It belongs to the RRF family.

The protein localises to the cytoplasm. Functionally, responsible for the release of ribosomes from messenger RNA at the termination of protein biosynthesis. May increase the efficiency of translation by recycling ribosomes from one round of translation to another. This Actinobacillus succinogenes (strain ATCC 55618 / DSM 22257 / CCUG 43843 / 130Z) protein is Ribosome-recycling factor.